The sequence spans 303 residues: MINRERLTHLKQLEAESIHILREVVAEFANPVMMYSVGKDSSVMLHLAMKAFAPSKLPFPLLHVDTKWKFKEMIEFRDQRAKDLGFDLVVYSNPEGEKMNISPFEHGSKVHTDVMKTQGLKQALNAGGYDAVIGGARRDEEKSRAKERIFSFRDKHHRWDPKNQRPELWNIYNTAIQKGESVRVFPISNWTELDVWQYIYLEGIPIPSLYFAKEREVVEYEGTKIMVDDDRMPETLRSTAQKEMVRFRTLGCYPLTGAINSSATTLPEIIKEMLLSTSSEREGRLIDKDQEGAMELKKIEGYF.

Belongs to the PAPS reductase family. CysD subfamily. As to quaternary structure, heterodimer composed of CysD, the smaller subunit, and CysN.

The catalysed reaction is sulfate + ATP + H(+) = adenosine 5'-phosphosulfate + diphosphate. It participates in sulfur metabolism; hydrogen sulfide biosynthesis; sulfite from sulfate: step 1/3. Its function is as follows. With CysN forms the ATP sulfurylase (ATPS) that catalyzes the adenylation of sulfate producing adenosine 5'-phosphosulfate (APS) and diphosphate, the first enzymatic step in sulfur assimilation pathway. APS synthesis involves the formation of a high-energy phosphoric-sulfuric acid anhydride bond driven by GTP hydrolysis by CysN coupled to ATP hydrolysis by CysD. This Sulfurovum sp. (strain NBC37-1) protein is Sulfate adenylyltransferase subunit 2.